We begin with the raw amino-acid sequence, 90 residues long: U7-theraphotoxin-Hhn1a 1 (90 aa).

Residues 1-19 (MKTAIFTVVLALAVFAVLS) form the signal peptide. Positions 20–50 (FGWEANEKALSEEFTELIHEKEAASETEARE) are excised as a propeptide. Intrachain disulfides connect Cys-51-Cys-65, Cys-58-Cys-70, and Cys-64-Cys-81.

This sequence belongs to the neurotoxin 10 (Hwtx-1) family. 13 (Hntx-13) subfamily. As to expression, expressed by the venom gland.

It is found in the secreted. In terms of biological role, ion channel inhibitor. This chain is U7-theraphotoxin-Hhn1a 1, found in Cyriopagopus hainanus (Chinese bird spider).